We begin with the raw amino-acid sequence, 614 residues long: MAAEVPAVSTPLSPLVQVPQEEDEQAEVTTMILEDDAWVQEAVLQEDGPESEPFPQSAGKGSPQEEDAAEGPQGALVRFRELCRRWLRPEVHTKEQMLTVLPREIQAWLQEHRPESSEEAVALVEDLTQTFRHSDFEIQSENGENSNEDMFEGVESHGMFLNISGGEGGQQSDGDSDFERDCGSGGAQGHAPGEDPRVVPSEGREVGQLIGLQGTYLGEKPYECPQCGKTFSRKSHLITHERTHTGEKYYKCDECGKSFSDGSNFSRHQTTHTGEKPYKCRDCGKSFSRSANLITHQRIHTGEKPFQCAECGKSFSRSPNLIAHQRTHTGEKPYSCPECGKSFGNRSSLNTHQGIHTGEKPYACKECGESFSYNSNLIRHQRIHTGEKPYKCTECGQKFSQSSALITHRRTHTGEKPYQCGECGKNFSRSSNLATHRRTHLVEKPYKCGLCGKSFSQSSSLIAHQGTHTGEKPYECLTCGESFSWSSNLIKHQRTHTGEKPYRCGDCGKGFSQRSQLVVHQRTHTGEKPYKCLMCGKSFSRGSILVMHQRAHLGDKPYRCPECGKGFSWNSVLIIHQRIHTGEKPYRCPECGKGFSNSSNFITHQRTHLKEKLY.

3 disordered regions span residues 1-25, 42-73, and 162-200; these read MAAEVPAVSTPLSPLVQVPQEEDEQ, AVLQEDGPESEPFPQSAGKGSPQEEDAAEGPQ, and NISGGEGGQQSDGDSDFERDCGSGGAQGHAPGEDPRVVP. The SCAN box domain occupies 69 to 127; that stretch reads AEGPQGALVRFRELCRRWLRPEVHTKEQMLTVLPREIQAWLQEHRPESSEEAVALVEDL. 14 C2H2-type zinc fingers span residues 222 to 244, 250 to 272, 278 to 300, 306 to 328, 334 to 356, 362 to 384, 390 to 412, 418 to 440, 446 to 468, 474 to 496, 502 to 524, 530 to 552, 558 to 580, and 586 to 608; these read YECPQCGKTFSRKSHLITHERTH, YKCDECGKSFSDGSNFSRHQTTH, YKCRDCGKSFSRSANLITHQRIH, FQCAECGKSFSRSPNLIAHQRTH, YSCPECGKSFGNRSSLNTHQGIH, YACKECGESFSYNSNLIRHQRIH, YKCTECGQKFSQSSALITHRRTH, YQCGECGKNFSRSSNLATHRRTH, YKCGLCGKSFSQSSSLIAHQGTH, YECLTCGESFSWSSNLIKHQRTH, YRCGDCGKGFSQRSQLVVHQRTH, YKCLMCGKSFSRGSILVMHQRAH, YRCPECGKGFSWNSVLIIHQRIH, and YRCPECGKGFSNSSNFITHQRTH.

Belongs to the krueppel C2H2-type zinc-finger protein family. In terms of tissue distribution, in the adult, predominantly found in spermatids. Also present in the embryo.

The protein localises to the nucleus. In terms of biological role, may be involved in transcriptional regulation during the post-meiotic stages of spermatogenesis. In Mus musculus (Mouse), this protein is Zinc finger and SCAN domain-containing protein 2 (Zscan2).